We begin with the raw amino-acid sequence, 232 residues long: Ribose-5-phosphate isomerase A (232 aa).

Residues 31–34 (TGST), 87–90 (DGAD), and 100–103 (KGGG) each bind substrate. Glu-109 serves as the catalytic Proton acceptor. Lys-127 lines the substrate pocket.

It belongs to the ribose 5-phosphate isomerase family. In terms of assembly, homodimer.

It carries out the reaction aldehydo-D-ribose 5-phosphate = D-ribulose 5-phosphate. It functions in the pathway carbohydrate degradation; pentose phosphate pathway; D-ribose 5-phosphate from D-ribulose 5-phosphate (non-oxidative stage): step 1/1. Functionally, catalyzes the reversible conversion of ribose-5-phosphate to ribulose 5-phosphate. This chain is Ribose-5-phosphate isomerase A, found in Bifidobacterium longum (strain DJO10A).